The chain runs to 84 residues: CDC42 small effector protein 2-A (84 aa).

Residues Cys10 and Cys11 are each lipidated (S-palmitoyl cysteine). Residues 29–42 (IGEPTNFVHTAHVG) form the CRIB domain.

It belongs to the CDC42SE/SPEC family.

The protein resides in the cytoplasm. It is found in the cytoskeleton. Its subcellular location is the cell membrane. Its function is as follows. Probably involved in the organization of the actin cytoskeleton by acting downstream of CDC42, inducing actin filament assembly. This is CDC42 small effector protein 2-A (cdc42se2-A) from Xenopus tropicalis (Western clawed frog).